The chain runs to 165 residues: Cytochrome c-550-like protein (165 aa).

The first 38 residues, 1–38, serve as a signal peptide directing secretion; the sequence is MPHLDQKLPMRWRIPSRLWAWVGILALLWLGLASPVAA. Positions 83, 86, 87, and 137 each coordinate heme c.

The protein belongs to the cytochrome c family. PsbV subfamily. It depends on heme c as a cofactor.

Its subcellular location is the cellular thylakoid membrane. Functionally, possible low-potential cytochrome c. The chain is Cytochrome c-550-like protein (psbV2) from Synechococcus sp. (strain JA-2-3B'a(2-13)) (Cyanobacteria bacterium Yellowstone B-Prime).